The following is a 350-amino-acid chain: Izumo sperm-egg fusion protein 1 (350 aa).

The signal sequence occupies residues 1 to 21 (MGPHFTLLCAALAGCLLPAEG). Disulfide bonds link Cys22–Cys149, Cys25–Cys152, Cys135–Cys159, Cys139–Cys165, and Cys182–Cys233. At 22–292 (CVICDPSVVL…LQPEKMLASR (271 aa)) the chain is on the extracellular side. Positions 148–160 (WCKNCKKEVHACR) are important for interaction with IZUMO1R. The Ig-like C2-type domain occupies 167 to 251 (ERNVEVPQME…PATIINFHVT (85 aa)). An N-linked (GlcNAc...) asparagine glycan is attached at Asn204. The helical transmembrane segment at 293–313 (LLGLLICGSLALITGLTFAIF) threads the bilayer. At 314–350 (RRRKVIDFIKSSLFGLGSGAAEQTQVPKEKATDSRQQ) the chain is on the cytoplasmic side. The residue at position 325 (Ser325) is a Phosphoserine.

The protein belongs to the Izumo family. In terms of assembly, monomer, homodimer; disulfide-linked and homooligomer; depending on the context. Interacts with IZUMO1R/JUNO. IZUMO1 and IZUMO1R/JUNO form a complex with 1:1 stoichiometry. In gamete recognition, IZUMO1R/JUNO first binds to monomeric IZUMO1. The weak, but specific interaction with IZUMO1R/JUNO induces IZUMO1 homodimerization. The process follows a tight binding phase where IZUMO1 bends the entire structure towards the sperm membrane side through a thiol-disulfide exchange reaction. The molecule no longer binds to IZUMO1R/JUNO and instead binds to a putative second oocyte receptor. Interacts with ACE3. Part of a oolemmal binding multimeric complex (IZUMO1 complex) composed at least of IZUMO1 and GLIPR1L1; the complex assemblage is influenced by the maturation status of the male germ cell. Interacts with GLIPR1L1. Interacts with FREY; the interaction retains IZUMO1 at the endoplasmic reticulum membrane and coordinates IZUMO1 complex assembly. Interacts with FCRL3/MAIA (via extracellular domain); the interaction replaces IZUMO1R/JUNO as IZUMO1 receptor after sperm-egg adhesion. Interacts with WDR54. Forms a complex with SPACA6 and TMEM81 on spermatocyte cell membrane. N-glycosylated. Glycosylation is not essential for fusion and for proper protein trafficking in sperm. Post-translationally, phosphorylated. The cytoplasmic C-terminus is phosphorylated and undergoes phosphorylation changes during epididymal transit. Sperm-specific (at protein level). Detectable on sperm surface only after the acrosome reaction.

It is found in the cell membrane. The protein resides in the cytoplasmic vesicle. It localises to the secretory vesicle. The protein localises to the acrosome membrane. Its function is as follows. Essential sperm cell-surface protein required for fertilization by acting as a ligand for IZUMO1R/JUNO receptor on egg. The IZUMO1:IZUMO1R/JUNO interaction is a necessary adhesion event between sperm and egg that is required for fertilization but is not sufficient for cell fusion. The ligand-receptor interaction probably does not act as a membrane 'fusogen'. Acts a ligand for the human-specific oolemma epitope FCRL3/MAIA during fertilization. FCRL3/MAIA replaces IZUMO1R/JUNO as IZUMO1 receptor after sperm-egg adhesion, which permits species-specific gamete fusion. Plays a critical role in sperm-oolemma binding prior to plasma membrane fusion. Can mediate cell-cell fusion in cultured mammalian cells independently of its binding to IZUMO1R/JUNO. The protein is Izumo sperm-egg fusion protein 1 of Homo sapiens (Human).